The sequence spans 552 residues: MKQNDTKKTTQRRNSKKYSSKTNRGTKRAPRDQEVGTGAQESTRNDVAWYARYPHILEEATRLPFAYPIGQYYDTGYSVASATEWSKYVDTSLTIPGVMCVNFTPTPGESYNKNSPINIAAQNVYTYVRHMNSGHANYEQADLMMYLLAMDSLYIFHSYVRKILAISKLYTPVNKYFPRALLVALGVDPEDVFANQAQWEYFVNMVAYRAGAFAAPASMTYYERHAWMSNGLYVDQDVTRAQIYMFKPTMLWKYENLGTTGTKLVPLMMPKAGDNRKLVDFQVLFNNLVSTMLGDEDFGIMSGDVFKAFGADGLVKLLAVDSTTMTLPTYDPLILAQIHSARAVGAPILETSTLTGFPGRQWQITQNPDVNNGAIIFHPSFGYDGQDHEELSFRAMCSNMILNLPGEAHSAEMIIEATRLATMFQVKAVPAGDTSKPVLYLPNGFGTEVVNDYTMISVDKATPHDLTIHTFFNNILVPNAKENYVANLELLNNIIQFDWAPQLYLTYGIAQESFGPFAQLNDWTILTGETLARMHEVCVTSMFDVPQMGFNK.

The interval 1–41 is disordered; the sequence is MKQNDTKKTTQRRNSKKYSSKTNRGTKRAPRDQEVGTGAQE. Positions 9–28 are enriched in basic residues; the sequence is TTQRRNSKKYSSKTNRGTKR.

Homodimer. Post-translationally, the 7 kDa polypeptide is acetylated. In terms of processing, autocatalytic proteolysis releases a post-translationally modified peptide that remains associated with nucleic acid within the virion. This peptide is observed only when nucleic acid is packaged in the capsid.

It localises to the virion. In terms of biological role, the capsid protein self-assembles to form an icosahedral capsid with a T=2 symmetry made of 120 subunits. This chain is Capsid protein precursor (Segment-1), found in Human picobirnavirus (strain Human/Thailand/Hy005102/-) (PBV).